The sequence spans 58 residues: Small ribosomal subunit protein bS21 (58 aa).

A compositionally biased stretch (basic and acidic residues) spans Glu31–Ser42. Residues Glu31 to Asn58 are disordered. Residues Val43–Asn58 show a composition bias toward basic residues.

The protein belongs to the bacterial ribosomal protein bS21 family.

The chain is Small ribosomal subunit protein bS21 from Agathobacter rectalis (strain ATCC 33656 / DSM 3377 / JCM 17463 / KCTC 5835 / VPI 0990) (Eubacterium rectale).